A 1279-amino-acid polypeptide reads, in one-letter code: Maestro heat-like repeat-containing protein family member 7 (1279 aa).

The segment at 1-145 (MALSRGTSLI…NSSRPCSEDV (145 aa)) is disordered. Positions 39-61 (PDLALAPPPEHALALTPALHPAL) are enriched in low complexity. Composition is skewed to polar residues over residues 71-106 (PVSN…NHTS) and 124-140 (PSST…SSRP). N-linked (GlcNAc...) asparagine glycans are attached at residues Asn-200, Asn-210, Asn-255, Asn-267, and Asn-296. Ser-356 carries the post-translational modification Phosphoserine. Asn-541 is a glycosylation site (N-linked (GlcNAc...) asparagine). Transmembrane regions (helical) follow at residues 548-568 (TLVT…LLLG) and 722-742 (LLPI…ALLM). 4 HEAT repeats span residues 913–950 (QELC…MEQV), 992–1029 (AKVQ…GQGK), 1035–1072 (AVYV…KLQT), and 1080–1117 (EQLT…FMNW).

Its subcellular location is the membrane. In Mus musculus (Mouse), this protein is Maestro heat-like repeat-containing protein family member 7 (Mroh7).